A 336-amino-acid chain; its full sequence is Protein SGT1 homolog (336 aa).

Ala-2 carries the N-acetylalanine modification. TPR repeat units follow at residues Ser-11–Asp-44, Ala-45–Asn-78, and Cys-79–Asp-112. One can recognise a CS domain in the interval Gln-140 to Glu-229. Position 236 is a phosphothreonine (Thr-236). One can recognise an SGS domain in the interval Met-247–Tyr-336. Ser-252 carries the phosphoserine modification. Residue Thr-255 is modified to Phosphothreonine. Lys-266 is covalently cross-linked (Glycyl lysine isopeptide (Lys-Gly) (interchain with G-Cter in SUMO1); alternate). Residue Lys-266 forms a Glycyl lysine isopeptide (Lys-Gly) (interchain with G-Cter in SUMO2); alternate linkage. Ser-302 bears the Phosphoserine mark.

It belongs to the SGT1 family. In terms of assembly, probably associates with SCF (SKP1-CUL1-F-box protein) complex through interaction with SKP1. Interacts with S100A6. Interacts with HSP90. Post-translationally, phosphorylated at Ser-252 and Ser-302, dephosphorylation promotes nuclear translocation, most likely due to disruption of the SUGT1-HSP90 complex.

It localises to the cytoplasm. Its subcellular location is the nucleus. Its function is as follows. May play a role in ubiquitination and subsequent proteasomal degradation of target proteins. This chain is Protein SGT1 homolog, found in Mus musculus (Mouse).